The following is a 397-amino-acid chain: S-adenosylmethionine synthase (397 aa).

His17 contacts ATP. Asp19 contributes to the Mg(2+) binding site. Glu45 contributes to the K(+) binding site. Glu58 and Gln101 together coordinate L-methionine. Positions 101–111 (QSPDIAQGVDK) are flexible loop. ATP is bound by residues 176 to 178 (DGK), 243 to 244 (RF), Asp252, 258 to 259 (RK), and Lys279. Residue Asp252 coordinates L-methionine. Lys283 contacts L-methionine.

It belongs to the AdoMet synthase family. In terms of assembly, homotetramer; dimer of dimers. Requires Mg(2+) as cofactor. K(+) is required as a cofactor.

The protein resides in the cytoplasm. It carries out the reaction L-methionine + ATP + H2O = S-adenosyl-L-methionine + phosphate + diphosphate. The protein operates within amino-acid biosynthesis; S-adenosyl-L-methionine biosynthesis; S-adenosyl-L-methionine from L-methionine: step 1/1. Catalyzes the formation of S-adenosylmethionine (AdoMet) from methionine and ATP. The overall synthetic reaction is composed of two sequential steps, AdoMet formation and the subsequent tripolyphosphate hydrolysis which occurs prior to release of AdoMet from the enzyme. In Staphylococcus aureus, this protein is S-adenosylmethionine synthase.